Reading from the N-terminus, the 365-residue chain is MSHNTFGHLFRVTTWGESHGPALGCVVDGCPPGLRFKLEDLQVWLDKRKPGQSRFVTQRREDDLVKVLSGVMLDADGETMTSTGTPISMLIENTDQRSKDYGEIARQYRPGHADYTYDLKYGIRDYRGGGRSSARETAARVAAGGIARLVVPGVTVRGALVQIGKHKIDRRNWDWDQVDQNPFFSPDAAIVPVWEEYLDGIRKAGSSIGAVIEVIAEGVPAGLGAPIYSKLDQDIASLLMSINAVKGVEIGNGFAAAETSGEDNADAMRMGNDGTPIFLSNNAGGILGGISTGQPVVARFAVKPTSSILTERQSIDADGKNVDVRTKGRHDPCVGIRAVPIGEAMVACAIADHYLRDRGQTGRLK.

NADP(+) is bound by residues R48 and R54. FMN-binding positions include 131–133, 243–244, G288, 303–307, and R329; these read RSS, NA, and KPTSS.

The protein belongs to the chorismate synthase family. Homotetramer. FMNH2 serves as cofactor.

The catalysed reaction is 5-O-(1-carboxyvinyl)-3-phosphoshikimate = chorismate + phosphate. It participates in metabolic intermediate biosynthesis; chorismate biosynthesis; chorismate from D-erythrose 4-phosphate and phosphoenolpyruvate: step 7/7. In terms of biological role, catalyzes the anti-1,4-elimination of the C-3 phosphate and the C-6 proR hydrogen from 5-enolpyruvylshikimate-3-phosphate (EPSP) to yield chorismate, which is the branch point compound that serves as the starting substrate for the three terminal pathways of aromatic amino acid biosynthesis. This reaction introduces a second double bond into the aromatic ring system. This chain is Chorismate synthase, found in Rhizobium etli (strain ATCC 51251 / DSM 11541 / JCM 21823 / NBRC 15573 / CFN 42).